The chain runs to 157 residues: MSLKSVRTHFTQWNRENDVTEFETSSATVEQAAETIGVSLSRIAKSLSFRGEGDQVILIVAAGDAKIDNKKSRQTFGFKARMLSPNEVLEQTGHEIGGVCPFGLAHDPEVYLDVSLKRFQTVFPACGSRNSAIELTPKELSEFSFSKVWIDVCKDWE.

This is an uncharacterized protein from Bacillus subtilis (strain 168).